A 211-amino-acid polypeptide reads, in one-letter code: Uracil phosphoribosyltransferase (211 aa).

Residues Arg-79, Arg-104, and 131–139 (DPMLATGGS) contribute to the 5-phospho-alpha-D-ribose 1-diphosphate site. Residues Ile-196 and 201–203 (GDA) each bind uracil. Asp-202 is a binding site for 5-phospho-alpha-D-ribose 1-diphosphate.

This sequence belongs to the UPRTase family. It depends on Mg(2+) as a cofactor.

It carries out the reaction UMP + diphosphate = 5-phospho-alpha-D-ribose 1-diphosphate + uracil. The protein operates within pyrimidine metabolism; UMP biosynthesis via salvage pathway; UMP from uracil: step 1/1. With respect to regulation, allosterically activated by GTP. In terms of biological role, catalyzes the conversion of uracil and 5-phospho-alpha-D-ribose 1-diphosphate (PRPP) to UMP and diphosphate. This chain is Uracil phosphoribosyltransferase, found in Limosilactobacillus reuteri (strain DSM 20016) (Lactobacillus reuteri).